The following is a 523-amino-acid chain: Calcium and calcium/calmodulin-dependent serine/threonine-protein kinase DMI-3 (523 aa).

One can recognise a Protein kinase domain in the interval 12–306; it reads YEVSEILGRG…ALELLSDPWV (295 aa). ATP-binding positions include 18 to 26 and Lys47; that span reads LGRGGFSVV. Asp171 serves as the catalytic Proton acceptor. Thr271 bears the Phosphothreonine mark. Positions 329-342 are calmodulin-binding; it reads ARRKLRAAAIASVW. EF-hand domains are found at residues 400–435, 436–471, and 478–513; these read SLIPFASRIFDLFDNNRDGTVDMREILCGFSSLKNS, KGEDALRLCFQMYDTDRSGCISKEEVASMLRALPYD, and TEPGKLDEIFDLMDANNDGKVTFDEFKAAMQRDSSL. Asp413, Asn415, Asp417, Thr419, Glu424, Asp449, Asp451, Ser453, Cys455, Glu460, Asp491, Asn493, Asp495, Lys497, and Glu502 together coordinate Ca(2+).

It belongs to the protein kinase superfamily. CAMK Ser/Thr protein kinase family. CaMK subfamily. In terms of assembly, interacts with IPD3. In terms of processing, autophosphorylation. As to expression, highly expressed in roots. Expressed in root hairs and nodules. Expressed at low levels in flowers. Not detected in leaves or stems.

It localises to the nucleus. The catalysed reaction is L-seryl-[protein] + ATP = O-phospho-L-seryl-[protein] + ADP + H(+). The enzyme catalyses L-threonyl-[protein] + ATP = O-phospho-L-threonyl-[protein] + ADP + H(+). Activated by calcium. Autophosphorylation may play an important role in the regulation of the kinase activity. Functionally, during nodulation, plays a central role in bacterial infection and contributes to nodule organogenesis. Protein kinase that recognizes the calcium spiking induced by Nod factors and translates this signal to components controlling nodulation and mycorrhizal infection responses. May phosphorylate the NSP1 protein. Required in epidermal and cortical cells to promote infection thread (IT) formation in root hairs. The protein is Calcium and calcium/calmodulin-dependent serine/threonine-protein kinase DMI-3 of Medicago truncatula (Barrel medic).